The primary structure comprises 911 residues: DNA mismatch repair protein MutS (911 aa).

660-667 (GPNMAGKS) is a binding site for ATP.

It belongs to the DNA mismatch repair MutS family.

Its function is as follows. This protein is involved in the repair of mismatches in DNA. It is possible that it carries out the mismatch recognition step. This protein has a weak ATPase activity. The sequence is that of DNA mismatch repair protein MutS from Rhodopseudomonas palustris (strain HaA2).